Reading from the N-terminus, the 383-residue chain is tRNA-specific 2-thiouridylase MnmA (383 aa).

ATP-binding positions include 16–23 (AMSGGVDS) and Leu-42. Cys-110 serves as the catalytic Nucleophile. Cys-110 and Cys-209 form a disulfide bridge. Gly-134 serves as a coordination point for ATP. An interaction with tRNA region spans residues 159–161 (KDQ). Cys-209 acts as the Cysteine persulfide intermediate in catalysis.

It belongs to the MnmA/TRMU family.

The protein resides in the cytoplasm. It catalyses the reaction S-sulfanyl-L-cysteinyl-[protein] + uridine(34) in tRNA + AH2 + ATP = 2-thiouridine(34) in tRNA + L-cysteinyl-[protein] + A + AMP + diphosphate + H(+). In terms of biological role, catalyzes the 2-thiolation of uridine at the wobble position (U34) of tRNA, leading to the formation of s(2)U34. The polypeptide is tRNA-specific 2-thiouridylase MnmA (Caulobacter vibrioides (strain ATCC 19089 / CIP 103742 / CB 15) (Caulobacter crescentus)).